The primary structure comprises 287 residues: Small ribosomal subunit biogenesis GTPase RsgA (287 aa).

The 158-residue stretch at 61 to 218 (SSELIRPTVA…LVDTPGFTTL (158 aa)) folds into the CP-type G domain. GTP contacts are provided by residues 110 to 113 (NKED) and 161 to 169 (GPSGAGKST). Residues Cys-242, Cys-247, His-249, and Cys-255 each contribute to the Zn(2+) site.

Belongs to the TRAFAC class YlqF/YawG GTPase family. RsgA subfamily. Monomer. Associates with 30S ribosomal subunit, binds 16S rRNA. The cofactor is Zn(2+).

The protein localises to the cytoplasm. One of several proteins that assist in the late maturation steps of the functional core of the 30S ribosomal subunit. Helps release RbfA from mature subunits. May play a role in the assembly of ribosomal proteins into the subunit. Circularly permuted GTPase that catalyzes slow GTP hydrolysis, GTPase activity is stimulated by the 30S ribosomal subunit. The polypeptide is Small ribosomal subunit biogenesis GTPase RsgA (Clostridium perfringens (strain SM101 / Type A)).